We begin with the raw amino-acid sequence, 1474 residues long: Adhesion G protein-coupled receptor L1 (1474 aa).

The N-terminal stretch at 1–24 (MARLAAVLWNLCVTAVLVTSATQG) is a signal peptide. Residues 25-858 (LSRAGLPFGL…EIYQGRINEL (834 aa)) are Extracellular-facing. The SUEL-type lectin domain maps to 40 to 129 (ACEGYPIELR…KYLEVQYDCV (90 aa)). Cystine bridges form between cysteine 41/cysteine 71, cysteine 50/cysteine 128, cysteine 83/cysteine 115, cysteine 96/cysteine 102, and cysteine 140/cysteine 322. Glutamate 42 contributes to the alpha-L-rhamnose binding site. Asparagine 98 is a glycosylation site (N-linked (GlcNAc...) asparagine). Position 117–120 (117–120 (GTYK)) interacts with alpha-L-rhamnose. One can recognise an Olfactomedin-like domain in the interval 139–398 (VCPGTLQKVL…VVRYSLEFGP (260 aa)). The segment at 400–434 (DPSAGPATSPPLSTTTTARPTPLTSTASPAATTPL) is disordered. A compositionally biased stretch (low complexity) spans 405–434 (PATSPPLSTTTTARPTPLTSTASPAATTPL). 2 disulfides stabilise this stretch: cysteine 480-cysteine 515 and cysteine 503-cysteine 532. N-linked (GlcNAc...) asparagine glycosylation is found at asparagine 531, asparagine 640, asparagine 742, asparagine 801, asparagine 806, and asparagine 827. The GAIN-B domain occupies 669 to 851 (PARFLAAKEN…AVLMAHREIY (183 aa)). 2 cysteine pairs are disulfide-bonded: cysteine 802/cysteine 833 and cysteine 821/cysteine 835. Residues 802–851 (CSFWNYSERSMLGYWSTQGCRLVESNKTHTTCACSHLTNFAVLMAHREIY) are GPS. The chain crosses the membrane as a helical span at residues 859–879 (LLSVITWVGIVISLVCLAICI). Topologically, residues 880–893 (STFCFLRGLQTDRN) are cytoplasmic. A helical transmembrane segment spans residues 894 to 914 (TIHKNLCINLFLAELLFLVGI). The Extracellular segment spans residues 915–920 (DKTQYE). Residues 921–941 (IACPIFAGLLHYFFLAAFSWL) traverse the membrane as a helical segment. Over 942–964 (CLEGVHLYLLLVEVFESEYSRTK) the chain is Cytoplasmic. A helical membrane pass occupies residues 965-985 (YYYLGGYCFPALVVGIAAAID). At 986-1002 (YRSYGTEKACWLRVDNY) the chain is on the extracellular side. Residues 1003–1023 (FIWSFIGPVSFVIVVNLVFLM) traverse the membrane as a helical segment. The Cytoplasmic portion of the chain corresponds to 1024–1050 (VTLHKMIRSSSVLKPDSSRLDNIKSWA). A helical membrane pass occupies residues 1051–1071 (LGAIALLFLLGLTWAFGLLFI). At 1072–1075 (NKES) the chain is on the extracellular side. A helical transmembrane segment spans residues 1076-1096 (VVMAYLFTTFNAFQGVFIFVF). The Cytoplasmic portion of the chain corresponds to 1097–1474 (HCALQKKVHK…DGQMQLVTSL (378 aa)). Arginine 1194 is modified (omega-N-methylarginine). Serine 1220 is modified (phosphoserine). Disordered stretches follow at residues 1248–1273 (FNNS…RGRN), 1294–1328 (RGSS…PGGA), 1360–1429 (ESES…SRPP), and 1451–1474 (YLAA…VTSL). Composition is skewed to pro residues over residues 1302-1314 (GPPP…PPVP) and 1408-1420 (ALPP…PGPP). The residue at position 1473 (serine 1473) is a Phosphoserine.

Belongs to the G-protein coupled receptor 2 family. Adhesion G-protein coupled receptor (ADGR) subfamily. As to quaternary structure, forms a heterodimer, consisting of a large extracellular region (p120) non-covalently linked to a seven-transmembrane moiety (p85). Interacts with syntaxin and with proteins of the SHANK family via the PDZ domain. Interacts (via extracellular domain) with FLRT1, FLRT2 and FLRT3 (via extracellular domain). Post-translationally, autoproteolytically cleaved into 2 subunits, an extracellular subunit and a seven-transmembrane subunit. This proteolytic processing takes place early in the biosynthetic pathway, either in the endoplasmic reticulum or in the early compartment of the Golgi apparatus.

It is found in the cell membrane. The protein localises to the cell projection. Its subcellular location is the axon. The protein resides in the growth cone. It localises to the synapse. It is found in the presynaptic cell membrane. The protein localises to the synaptosome. In terms of biological role, calcium-independent receptor of high affinity for alpha-latrotoxin, an excitatory neurotoxin present in black widow spider venom which triggers massive exocytosis from neurons and neuroendocrine cells. Receptor for TENM2 that mediates heterophilic synaptic cell-cell contact and postsynaptic specialization. Receptor probably implicated in the regulation of exocytosis. This chain is Adhesion G protein-coupled receptor L1, found in Homo sapiens (Human).